The chain runs to 205 residues: uncharacterized protein (205 aa).

4 helical membrane passes run 18 to 38 (ATVN…GTIG), 69 to 89 (LGIF…CFYA), 106 to 126 (VVWI…YYIM), and 127 to 147 (LLHP…LFLI).

The protein localises to the mitochondrion membrane. This is an uncharacterized protein from Arabidopsis thaliana (Mouse-ear cress).